Reading from the N-terminus, the 276-residue chain is Formamidopyrimidine-DNA glycosylase (276 aa).

Pro-2 (schiff-base intermediate with DNA) is an active-site residue. Glu-3 serves as the catalytic Proton donor. Residue Lys-58 is the Proton donor; for beta-elimination activity of the active site. DNA is bound by residues His-92, Arg-111, and Arg-154. The FPG-type zinc finger occupies 239-273 (HAYQRTGDPCERCGTPIQRIVVGQRGTHFCPKCQV). Residue Arg-263 is the Proton donor; for delta-elimination activity of the active site.

The protein belongs to the FPG family. As to quaternary structure, monomer. The cofactor is Zn(2+).

It carries out the reaction Hydrolysis of DNA containing ring-opened 7-methylguanine residues, releasing 2,6-diamino-4-hydroxy-5-(N-methyl)formamidopyrimidine.. The enzyme catalyses 2'-deoxyribonucleotide-(2'-deoxyribose 5'-phosphate)-2'-deoxyribonucleotide-DNA = a 3'-end 2'-deoxyribonucleotide-(2,3-dehydro-2,3-deoxyribose 5'-phosphate)-DNA + a 5'-end 5'-phospho-2'-deoxyribonucleoside-DNA + H(+). Functionally, involved in base excision repair of DNA damaged by oxidation or by mutagenic agents. Acts as a DNA glycosylase that recognizes and removes damaged bases. Has a preference for oxidized purines, such as 7,8-dihydro-8-oxoguanine (8-oxoG). Has AP (apurinic/apyrimidinic) lyase activity and introduces nicks in the DNA strand. Cleaves the DNA backbone by beta-delta elimination to generate a single-strand break at the site of the removed base with both 3'- and 5'-phosphates. The polypeptide is Formamidopyrimidine-DNA glycosylase (Ligilactobacillus salivarius (strain UCC118) (Lactobacillus salivarius)).